Reading from the N-terminus, the 556-residue chain is Glycosyl hydrolase 5 family protein (556 aa).

Residues Met-1–Ser-28 form the signal peptide. N-linked (GlcNAc...) asparagine glycosylation is found at Asn-102 and Asn-113. The active-site Proton donor/acceptor is the Glu-208. N-linked (GlcNAc...) asparagine glycosylation is found at Asn-212, Asn-290, and Asn-307. Glu-473 acts as the Nucleophile in catalysis. Residues Asn-474 and Asn-479 are each glycosylated (N-linked (GlcNAc...) asparagine).

This sequence belongs to the glycosyl hydrolase 5 (cellulase A) family. Post-translationally, glycosylated.

In terms of biological role, may have glycosyl hydrolase activity. In Chamaecyparis obtusa (Hinoki false-cypress), this protein is Glycosyl hydrolase 5 family protein.